Reading from the N-terminus, the 310-residue chain is Homoserine kinase (310 aa).

91-101 (PIGSGLGSSAC) contributes to the ATP binding site.

It belongs to the GHMP kinase family. Homoserine kinase subfamily.

Its subcellular location is the cytoplasm. It carries out the reaction L-homoserine + ATP = O-phospho-L-homoserine + ADP + H(+). The protein operates within amino-acid biosynthesis; L-threonine biosynthesis; L-threonine from L-aspartate: step 4/5. Catalyzes the ATP-dependent phosphorylation of L-homoserine to L-homoserine phosphate. The polypeptide is Homoserine kinase (Escherichia coli O81 (strain ED1a)).